A 403-amino-acid polypeptide reads, in one-letter code: Large ribosomal subunit protein uL3 (403 aa).

The tract at residues 1-38 is disordered; sequence MSHRKFSAPRHGSLGFLPRKRSSRHRGKVKSFPKDDSS. A Phosphoserine modification is found at S13. The span at 18 to 31 shows a compositional bias: basic residues; the sequence is PRKRSSRHRGKVKS. K39 participates in a covalent cross-link: Glycyl lysine isopeptide (Lys-Gly) (interchain with G-Cter in SUMO2). K136 bears the N6-acetyllysine mark. Glycyl lysine isopeptide (Lys-Gly) (interchain with G-Cter in SUMO2) cross-links involve residues K224 and K226. H245 carries the post-translational modification Tele-methylhistidine. 2 positions are modified to N6-acetyllysine; alternate: K286 and K294. K286 is covalently cross-linked (Glycyl lysine isopeptide (Lys-Gly) (interchain with G-Cter in SUMO2); alternate). Residue K294 forms a Glycyl lysine isopeptide (Lys-Gly) (interchain with G-Cter in SUMO1); alternate linkage. Residue S304 is modified to Phosphoserine. At K366 the chain carries N6-acetyllysine; alternate. Residue K366 forms a Glycyl lysine isopeptide (Lys-Gly) (interchain with G-Cter in SUMO2); alternate linkage. Position 373 is an N6-acetyllysine (K373). Glycyl lysine isopeptide (Lys-Gly) (interchain with G-Cter in SUMO2) cross-links involve residues K386, K393, and K399.

This sequence belongs to the universal ribosomal protein uL3 family. As to quaternary structure, component of the large ribosomal subunit. Interacts with DHX33. Constitutively monomethylated at His-245 by METTL18. Methylation at His-245 regulates translation elongation by slowing ribosome traversal on tyrosine codons: slower elongation provides enough time for proper folding of synthesized proteins and prevents cellular aggregation of tyrosine-rich proteins It is not required for incorporation of RPL3 into ribosomes.

Its subcellular location is the nucleus. The protein resides in the nucleolus. It is found in the cytoplasm. Functionally, component of the large ribosomal subunit. The ribosome is a large ribonucleoprotein complex responsible for the synthesis of proteins in the cell. This Sus scrofa (Pig) protein is Large ribosomal subunit protein uL3 (RPL3).